Here is a 293-residue protein sequence, read N- to C-terminus: uncharacterized protein (293 aa).

It to M.jannaschii MJ1614 and MJ0008.

This is an uncharacterized protein from Methanocaldococcus jannaschii (strain ATCC 43067 / DSM 2661 / JAL-1 / JCM 10045 / NBRC 100440) (Methanococcus jannaschii).